The chain runs to 131 residues: ER membrane protein complex subunit 5 (131 aa).

Residues 1-3 (MAP) lie on the Cytoplasmic side of the membrane. A helical transmembrane segment spans residues 4–22 (SLWKGLVGIGLFALAHAAL). At 23–43 (SAAQHRSYMRLTEKEDESLPI) the chain is on the lumenal side. The chain crosses the membrane as a helical span at residues 44 to 63 (DIVLQTLLAFAVTCYGIVHI). The Cytoplasmic portion of the chain corresponds to 64 to 131 (AGEFKDMDAT…KLRKLESLRR (68 aa)). Phosphoserine is present on S120.

It belongs to the membrane magnesium transporter (TC 1.A.67) family. As to quaternary structure, component of the ER membrane protein complex (EMC).

Its subcellular location is the endoplasmic reticulum membrane. It localises to the golgi apparatus membrane. The protein resides in the early endosome membrane. Functionally, part of the endoplasmic reticulum membrane protein complex (EMC) that enables the energy-independent insertion into endoplasmic reticulum membranes of newly synthesized membrane proteins. Preferentially accommodates proteins with transmembrane domains that are weakly hydrophobic or contain destabilizing features such as charged and aromatic residues. Involved in the cotranslational insertion of multi-pass membrane proteins in which stop-transfer membrane-anchor sequences become ER membrane spanning helices. It is also required for the post-translational insertion of tail-anchored/TA proteins in endoplasmic reticulum membranes. By mediating the proper cotranslational insertion of N-terminal transmembrane domains in an N-exo topology, with translocated N-terminus in the lumen of the ER, controls the topology of multi-pass membrane proteins like the G protein-coupled receptors. By regulating the insertion of various proteins in membranes, it is indirectly involved in many cellular processes. May be involved in Mg(2+) transport. The sequence is that of ER membrane protein complex subunit 5 from Pongo abelii (Sumatran orangutan).